The following is a 127-amino-acid chain: UPF0738 protein Bsph_1225 (127 aa).

Belongs to the UPF0738 family.

This is UPF0738 protein Bsph_1225 from Lysinibacillus sphaericus (strain C3-41).